The primary structure comprises 431 residues: Gamma conglutin 1 (431 aa).

The N-terminal stretch at 1–24 (MASFLHNFLLFFCSLSLIILTSSA) is a signal peptide. One can recognise a Peptidase A1 domain in the interval 51–407 (HVVQIHKRTP…DLMNSRLGFS (357 aa)). Disulfide bonds link C79/C168, C93/C106, C98/C123, C109/C118, and C322/C369.

The protein belongs to the peptidase A1 family. As to quaternary structure, two-subunit monomeric unit made of alpha and beta subunits coupled by disulfide bonds (at pH 4.5 and under non-reducing conditions). Monomeric alpha and beta subunits in reducing conditions. Can also form oligomers including dimer, tetramer and cyclic hexamer (trimer of dimers) (at pH &gt; 5.5). Component of globulins complexes which accumulate in seeds. Interacts with flavonoids (e.g. apigenin glucosides) present in globulins complexes.

Its subcellular location is the secreted. It localises to the extracellular space. Functionally, sulfur-rich seed storage protein that remains undegraded at germination. This is Gamma conglutin 1 from Prunus dulcis (Almond).